The chain runs to 355 residues: Peptide chain release factor 1 (355 aa).

Gln-233 bears the N5-methylglutamine mark.

It belongs to the prokaryotic/mitochondrial release factor family. Post-translationally, methylated by PrmC. Methylation increases the termination efficiency of RF1.

It is found in the cytoplasm. Peptide chain release factor 1 directs the termination of translation in response to the peptide chain termination codons UAG and UAA. In Bacillus cereus (strain ATCC 14579 / DSM 31 / CCUG 7414 / JCM 2152 / NBRC 15305 / NCIMB 9373 / NCTC 2599 / NRRL B-3711), this protein is Peptide chain release factor 1.